Here is a 114-residue protein sequence, read N- to C-terminus: T cell receptor alpha variable 10 (114 aa).

Residues 1 to 21 (MKKHLTTFLVILWLYFYRGNG) form the signal peptide. One can recognise an Ig-like domain in the interval 23–114 (NQVEQSPQSL…DSASYICVVS (92 aa)). Residues Asn-39 and Asn-45 are each glycosylated (N-linked (GlcNAc...) asparagine). Cys-44 and Cys-111 are disulfide-bonded.

In terms of assembly, alpha-beta TR is a heterodimer composed of an alpha and beta chain; disulfide-linked. The alpha-beta TR is associated with the transmembrane signaling CD3 coreceptor proteins to form the TR-CD3 (TcR or TCR). The assembly of alpha-beta TR heterodimers with CD3 occurs in the endoplasmic reticulum where a single alpha-beta TR heterodimer associates with one CD3D-CD3E heterodimer, one CD3G-CD3E heterodimer and one CD247 homodimer forming a stable octameric structure. CD3D-CD3E and CD3G-CD3E heterodimers preferentially associate with TR alpha and TR beta chains, respectively. The association of the CD247 homodimer is the last step of TcR assembly in the endoplasmic reticulum and is required for transport to the cell surface.

The protein localises to the cell membrane. In terms of biological role, v region of the variable domain of T cell receptor (TR) alpha chain that participates in the antigen recognition. Alpha-beta T cell receptors are antigen specific receptors which are essential to the immune response and are present on the cell surface of T lymphocytes. Recognize peptide-major histocompatibility (MH) (pMH) complexes that are displayed by antigen presenting cells (APC), a prerequisite for efficient T cell adaptive immunity against pathogens. Binding of alpha-beta TR to pMH complex initiates TR-CD3 clustering on the cell surface and intracellular activation of LCK that phosphorylates the ITAM motifs of CD3G, CD3D, CD3E and CD247 enabling the recruitment of ZAP70. In turn ZAP70 phosphorylates LAT, which recruits numerous signaling molecules to form the LAT signalosome. The LAT signalosome propagates signal branching to three major signaling pathways, the calcium, the mitogen-activated protein kinase (MAPK) kinase and the nuclear factor NF-kappa-B (NF-kB) pathways, leading to the mobilization of transcription factors that are critical for gene expression and essential for T cell growth and differentiation. The T cell repertoire is generated in the thymus, by V-(D)-J rearrangement. This repertoire is then shaped by intrathymic selection events to generate a peripheral T cell pool of self-MH restricted, non-autoaggressive T cells. Post-thymic interaction of alpha-beta TR with the pMH complexes shapes TR structural and functional avidity. The protein is T cell receptor alpha variable 10 of Homo sapiens (Human).